A 448-amino-acid chain; its full sequence is MIHGKTLAEWQQSHPEIRELTGLRECAWFNPAAAPAAEALPDVGLGAADIADASARLRRFAPYISRAFPETAASGGIIESPLLPVPAFQQALARRRGRELPGRLWLKADSHLPISGSIKARGGIYEVLKHAEDLALANGLLQPGDDYARLASPEARSLFSRHGIAVGSTGNLGLSIGIMAAKLGFQAAVHMSADARQWKKDKLRAHGVTVVEYQTDYSAAVARGREQAARDPDCHFVDDENSIHLFLGYAVAAERLKAQLAEAGVRVDADHPLFVYLPCGVGGGPGGVAFGLKQAFGDAVHCLFAEPTRSPCMLLGVLTGLHDKVSVQDFGIDNRTVADGLAVGRPSGFVGRAMQRLIDGYYTVDDDELFRLLAMLEQTEGLRLEPSALAGAPGIARVLEENQGYRQRMGLDADRLACATHLIWATGGSMVPEAEMDGYLRRGRALLG.

Lys-119 carries the post-translational modification N6-(pyridoxal phosphate)lysine.

Belongs to the serine/threonine dehydratase family. DsdA subfamily. Pyridoxal 5'-phosphate is required as a cofactor.

It catalyses the reaction D-serine = pyruvate + NH4(+). This is Probable D-serine dehydratase from Chromobacterium violaceum (strain ATCC 12472 / DSM 30191 / JCM 1249 / CCUG 213 / NBRC 12614 / NCIMB 9131 / NCTC 9757 / MK).